We begin with the raw amino-acid sequence, 608 residues long: N(6)-adenosine-methyltransferase MT-A70-like protein (608 aa).

The segment covering lysine 250–valine 265 has biased composition (basic and acidic residues). Residues lysine 250–threonine 272 form a disordered region. Residues aspartate 395–leucine 396 and aspartate 413 each bind S-adenosyl-L-methionine. Residues proline 414–serine 428 form a gate loop 1 region. Residues glutamine 480–glycine 497 are interphase loop. Residues arginine 483 to histidine 496 form a positively charged region required for RNA-binding region. The tract at residues valine 525–aspartate 533 is gate loop 2. Residues lysine 531, arginine 554–asparagine 557, and asparagine 567–glutamine 568 each bind S-adenosyl-L-methionine.

It belongs to the MT-A70-like family. In terms of assembly, component of the WMM complex, a N6-methyltransferase complex composed of a catalytic subcomplex, named MAC, and of an associated subcomplex, named MACOM. The MAC subcomplex is composed of Ime4/Mettl3 and Mettl14. The MACOM subcomplex is composed of fl(2)d, Flacc/Xio, Hakai, vir, and, in some cases of nito. In terms of tissue distribution, expressed in testes. In the ovaries, detected in germaria, prefollicle, follicle and polar cells (at protein levels). Detected in the ooplasm and in the cells of the 16-cell cyst of early stages (at protein levels).

It is found in the nucleus. The catalysed reaction is an adenosine in mRNA + S-adenosyl-L-methionine = an N(6)-methyladenosine in mRNA + S-adenosyl-L-homocysteine + H(+). Catalytic component of the WMM complex, a complex that mediates N6-methyladenosine (m6A) methylation of mRNAs, a modification that plays a role in the efficiency of mRNA splicing and is required for sex determination. In the heterodimer formed with Mettl14, constitutes the catalytic core. Required for sex determination and dosage compensation via Sxl alternative splicing: m6A methylation acts as a key regulator of Sxl pre-mRNA and promotes female-specific alternative splicing of Sxl, which determines female physiognomy. M6A methylation is also required for neuronal functions. During oogenesis, required for egg chamber development probably as part of the N/Notch signaling. This is N(6)-adenosine-methyltransferase MT-A70-like protein from Drosophila melanogaster (Fruit fly).